The sequence spans 740 residues: D-ornithine 4,5-aminomutase subunit beta (740 aa).

Substrate contacts are provided by residues glutamate 81, tyrosine 160, histidine 182, and 294–296 (RAQ). Residues 602–739 (PLKIVAATVG…VKKRREMREG (138 aa)) form the B12-binding domain. Residues 614-616 (EHS) and histidine 615 contribute to the adenosylcob(III)alamin site. The residue at position 626 (lysine 626) is an N6-(pyridoxal phosphate)lysine. Adenosylcob(III)alamin is bound by residues 664 to 669 (STIISH), threonine 700, and serine 720.

In terms of assembly, heterotetramer of 2 alpha (OraS) and 2 beta (OraE) subunits. Requires adenosylcob(III)alamin as cofactor. It depends on pyridoxal 5'-phosphate as a cofactor.

It carries out the reaction D-ornithine = (2R,4S)-2,4-diaminopentanoate. Increased activity in the presence of dithiothreitol (DTT) in vitro. Inhibited by 1 mM potassium phosphate and potassium chloride. Inhibited by L-alpha-ornithine, D,L-alpha-lysine, L-beta-lysine (50%-60%), L-alpha-lysine (26%) and by delta-amino-n-valeric acid to a lesser extent. Significant decrease in activity is observed in the presence of 0.2 mM p-chloromercuribenzoate, N-ethylmaleimide and also by 2 mM iodoacetate to a lesser extent but not inhibited by arsenite. In terms of biological role, component of a complex that catalyzes the reversible migration of the omega amino group of D-ornithine to C-4 to form (2R,4S)-2,4-diaminopentanoic acid. OraE may be the catalytic subunit. Active only on D-ornithine and 2,4-diaminopentanoic acid but not active on L-ornithine, L-beta-lysine, L-alpha-lysine or D-alpha-lysine. The polypeptide is D-ornithine 4,5-aminomutase subunit beta (oraE) (Acetoanaerobium sticklandii (strain ATCC 12662 / DSM 519 / JCM 1433 / CCUG 9281 / NCIMB 10654 / HF) (Clostridium sticklandii)).